Consider the following 166-residue polypeptide: Cyclic pyranopterin monophosphate synthase (166 aa).

Substrate is bound by residues 83–85 and 121–122; these read LCH and ME. The active site involves aspartate 136.

The protein belongs to the MoaC family. Homohexamer; trimer of dimers.

The catalysed reaction is (8S)-3',8-cyclo-7,8-dihydroguanosine 5'-triphosphate = cyclic pyranopterin phosphate + diphosphate. It participates in cofactor biosynthesis; molybdopterin biosynthesis. Its function is as follows. Catalyzes the conversion of (8S)-3',8-cyclo-7,8-dihydroguanosine 5'-triphosphate to cyclic pyranopterin monophosphate (cPMP). The polypeptide is Cyclic pyranopterin monophosphate synthase (Rhodospirillum rubrum (strain ATCC 11170 / ATH 1.1.1 / DSM 467 / LMG 4362 / NCIMB 8255 / S1)).